Here is a 327-residue protein sequence, read N- to C-terminus: uncharacterized protein (327 aa).

A compositionally biased stretch (low complexity) spans M1–S17. Residues M1 to L22 form a disordered region. Residue A2 is modified to N-acetylalanine. S37 bears the Phosphoserine mark. Residues G76 to L113 form a disordered region. At S129 the chain carries Phosphoserine. Positions S134–A148 are enriched in polar residues. Residues S134–D299 are disordered. Residues S162–L176 show a composition bias toward low complexity. S175 carries the post-translational modification Phosphoserine. Basic and acidic residues-rich tracts occupy residues T182–G202 and P233–Q252. The residue at position 289 (S289) is a Phosphoserine.

The protein localises to the cytoplasm. This is an uncharacterized protein from Homo sapiens (Human).